We begin with the raw amino-acid sequence, 539 residues long: O-phosphoserine--tRNA(Cys) ligase (539 aa).

Substrate is bound by residues 188–190 (HMT), 233–235 (SAS), 275–276 (YY), and N327.

Belongs to the class-II aminoacyl-tRNA synthetase family. O-phosphoseryl-tRNA(Cys) synthetase subfamily. Homotetramer. Interacts with SepCysS.

It carries out the reaction tRNA(Cys) + O-phospho-L-serine + ATP = O-phospho-L-seryl-tRNA(Cys) + AMP + diphosphate. Catalyzes the attachment of O-phosphoserine (Sep) to tRNA(Cys). This is O-phosphoserine--tRNA(Cys) ligase from Methanosarcina barkeri (strain Fusaro / DSM 804).